The primary structure comprises 83 residues: Tetracenomycin polyketide synthase acyl carrier protein (83 aa).

The region spanning 3–83 (QIGLPRLVEI…VNTETAGEVA (81 aa)) is the Carrier domain. Residue S41 is modified to O-(pantetheine 4'-phosphoryl)serine.

The tetracenomycin polyketide synthase (TCM PKS) is composed of a ketosynthase complex (TcmKL), an acyl carrier protein (TcmM), a cyclase (TcmN) and a probable second cyclase (TcmJ). Pantetheine 4'-phosphate is required as a cofactor. Post-translationally, 4'-phosphopantetheine is transferred from CoA to a specific serine of apo-ACP.

It catalyses the reaction 10 malonyl-CoA + 8 H(+) = tetracenomycin F2 + 10 CO2 + 10 CoA + 2 H2O. Its pathway is antibiotic biosynthesis; tetracenomycin C biosynthesis. In terms of biological role, involved in the biosynthesis of tetracenomycin C (TCM C). Part of a type II polyketide synthase (PKS) that catalyzes the synthesis of tetracenomycin F2 (TCM F2), a precursor of TCM C, from malonyl-CoA. TcmM is an acyl carrier protein that serves as an acceptor of malonate from malonyl-CoA and acts as the tether for the substrates and intermediates of polyketide assembly. The malonyl CoA-acyl carrier protein transacylase FabD (MCT) is required to catalyze the transacylation between malonyl-CoA and TcmM, although a relatively slow spontaneous self-malonylation of TcmM also occurs in a reaction without the MCT. The protein is Tetracenomycin polyketide synthase acyl carrier protein of Streptomyces glaucescens.